We begin with the raw amino-acid sequence, 185 residues long: Ribosome-recycling factor (185 aa).

The protein belongs to the RRF family.

Its subcellular location is the cytoplasm. Its function is as follows. Responsible for the release of ribosomes from messenger RNA at the termination of protein biosynthesis. May increase the efficiency of translation by recycling ribosomes from one round of translation to another. This Desulfosudis oleivorans (strain DSM 6200 / JCM 39069 / Hxd3) (Desulfococcus oleovorans) protein is Ribosome-recycling factor.